Reading from the N-terminus, the 265-residue chain is DNA-binding dual transcriptional regulator Rns (265 aa).

Decanoate contacts are provided by H20 and R75. The region spanning 164–261 (DKVRNLIEKD…GVTPKQFFTY (98 aa)) is the HTH araC/xylS-type domain. 2 DNA-binding regions (H-T-H motif) span residues 181-202 (GIIA…ESEN) and 228-251 (ISQI…NKHY).

In terms of assembly, homodimer; each subunit binds one decanoate molecule.

It is found in the cytoplasm. With respect to regulation, rns-dependent expression of pilins and outer membrane proteins CexE-alpha and CexE-epsilon are inhibited in vivo by decanoic acid (decanoate); has no effect on expression of DnaK or flagellins. Decanoate relieves Rns-dependent repression of nlpA. Its function is as follows. A transcription factor required for the expression of the CS1 and CS2 adhesins of enterotoxigenic E.coli. Required for expression of pilins and some outer membrane lipoproteins. Represses expression of nlpA. In Escherichia coli, this protein is DNA-binding dual transcriptional regulator Rns.